Reading from the N-terminus, the 215-residue chain is Putative O-methyltransferase MAB_1361c (215 aa).

S-adenosyl-L-methionine is bound by residues Val-42, Glu-64, 66-67, Ser-72, Asp-90, and Val-91; that span reads GT. Asp-138 provides a ligand contact to substrate.

Belongs to the class I-like SAM-binding methyltransferase superfamily. Cation-dependent O-methyltransferase family.

The chain is Putative O-methyltransferase MAB_1361c from Mycobacteroides abscessus (strain ATCC 19977 / DSM 44196 / CCUG 20993 / CIP 104536 / JCM 13569 / NCTC 13031 / TMC 1543 / L948) (Mycobacterium abscessus).